Reading from the N-terminus, the 748-residue chain is Catalase-peroxidase (748 aa).

Residues 91–236 (WHSAGTYRVG…LAAVQMGLIY (146 aa)) constitute a cross-link (tryptophyl-tyrosyl-methioninium (Trp-Tyr) (with M-262)). H92 acts as the Proton acceptor in catalysis. The disordered stretch occupies residues 201–223 (AQPVADKAGHGKEHGRTDGGRNL). A compositionally biased stretch (basic and acidic residues) spans 207–221 (KAGHGKEHGRTDGGR). Positions 236 to 262 (YVNPEGPDGNPDPQASAHDIRETFARM) form a cross-link, tryptophyl-tyrosyl-methioninium (Tyr-Met) (with W-91). H277 contributes to the heme b binding site.

This sequence belongs to the peroxidase family. Peroxidase/catalase subfamily. As to quaternary structure, homodimer or homotetramer. Heme b is required as a cofactor. Post-translationally, formation of the three residue Trp-Tyr-Met cross-link is important for the catalase, but not the peroxidase activity of the enzyme.

The enzyme catalyses H2O2 + AH2 = A + 2 H2O. It catalyses the reaction 2 H2O2 = O2 + 2 H2O. Functionally, bifunctional enzyme with both catalase and broad-spectrum peroxidase activity. This is Catalase-peroxidase from Bordetella avium (strain 197N).